The sequence spans 155 residues: SsrA-binding protein (155 aa).

The protein belongs to the SmpB family.

The protein localises to the cytoplasm. Functionally, required for rescue of stalled ribosomes mediated by trans-translation. Binds to transfer-messenger RNA (tmRNA), required for stable association of tmRNA with ribosomes. tmRNA and SmpB together mimic tRNA shape, replacing the anticodon stem-loop with SmpB. tmRNA is encoded by the ssrA gene; the 2 termini fold to resemble tRNA(Ala) and it encodes a 'tag peptide', a short internal open reading frame. During trans-translation Ala-aminoacylated tmRNA acts like a tRNA, entering the A-site of stalled ribosomes, displacing the stalled mRNA. The ribosome then switches to translate the ORF on the tmRNA; the nascent peptide is terminated with the 'tag peptide' encoded by the tmRNA and targeted for degradation. The ribosome is freed to recommence translation, which seems to be the essential function of trans-translation. In Streptococcus pyogenes serotype M5 (strain Manfredo), this protein is SsrA-binding protein.